Here is a 437-residue protein sequence, read N- to C-terminus: Integrase (437 aa).

One can recognise a Core-binding (CB) domain in the interval 73–158 (WTVERWLTHW…TARTAFGEAY (86 aa)). A Tyr recombinase domain is found at 179–428 (EEVEPLEVED…DSVRNDVADR (250 aa)). Active-site residues include R214, K245, H379, R382, and W405. Y414 serves as the catalytic O-(3'-phospho-DNA)-tyrosine intermediate.

The protein belongs to the 'phage' integrase family.

Is a recombinase (or integrase), catalyzing the cutting and rejoining of the recombining DNA molecules. This is Integrase (int) from Saccharopolyspora erythraea (Streptomyces erythraeus).